The following is a 509-amino-acid chain: Ceramide glucosyltransferase (509 aa).

Topologically, residues 1-42 (MIMQLGLTSLAFLALKCDAYNIAPKIDTPNVEPFAPSGGLKL) are lumenal. The chain crosses the membrane as a helical span at residues 43–63 (LAIVAIIWYVVVLLVAYYGFF). Residues 64–384 (EIMQKFSKRK…EATLLEPTTE (321 aa)) lie on the Cytoplasmic side of the membrane. A short sequence motif (D1) is located at residue D123. Residue D179 is a short sequence motif, D2. Position 321 (D321) is a short sequence motif, D3. The Proton acceptor role is filled by D321. The (Q/R)XXRW motif lies at 361–365 (RRIRW). A helical transmembrane segment spans residues 385–405 (CLLCGTFGTFAISTLFLQSYF). Residues 406–408 (NWK) are Lumenal-facing. The helical transmembrane segment at 409–429 (FFIFHLLVWMVTDYTQFHILL) threads the bilayer. Residues 430-466 (TNASQDTATCNVPYFAEPNFNAYGSPFESSNLRTFHR) are Cytoplasmic-facing. A helical transmembrane segment spans residues 467–487 (WVLYWLLREVLALPIWISAML). Residues 488–509 (GTRIIWRNRPFRINVDLSAEEL) are Lumenal-facing.

The protein belongs to the glycosyltransferase 2 family.

It is found in the golgi apparatus membrane. It catalyses the reaction an N-acylsphing-4-enine + UDP-alpha-D-glucose = a beta-D-glucosyl-(1&lt;-&gt;1')-N-acylsphing-4-enine + UDP + H(+). It participates in lipid metabolism; sphingolipid metabolism. In terms of biological role, catalyzes the final step in the biosynthesis of the membrane lipid glucosylceramide (GluCer), the transfer of glucose to ceramide. Glucosylceramides play important roles in growth, differentiation and pathogenicity. This chain is Ceramide glucosyltransferase, found in Komagataella phaffii (strain GS115 / ATCC 20864) (Yeast).